A 362-amino-acid polypeptide reads, in one-letter code: N-alpha-acetyltransferase 30 (362 aa).

Residues 1-20 are compositionally biased toward pro residues; that stretch reads MAEVPPGPSSLLPPPAPPAP. 3 disordered regions span residues 1 to 26, 38 to 88, and 113 to 182; these read MAEV…VEPR, CSED…NGLI, and ATTA…EEDE. Residues S39 and S55 each carry the phosphoserine modification. The span at 39 to 48 shows a compositional bias: acidic residues; that stretch reads SEDEEDDEEH. T117 bears the Phosphothreonine mark. Over residues 149–165 the composition is skewed to low complexity; sequence AVPSPVEAAAASDPAAA. Residue S152 is modified to Phosphoserine. Positions 173-182 are enriched in acidic residues; the sequence is TEQEEEEEDE. Residues S190, S196, and S199 each carry the phosphoserine modification. An N-acetyltransferase domain is found at 214 to 362; sequence RYVRYESELQ…DALRLKLWLR (149 aa). The residue at position 233 (K233) is an N6-acetyllysine.

It belongs to the acetyltransferase family. MAK3 subfamily. As to quaternary structure, component of the N-terminal acetyltransferase C (NatC) complex, which is composed of NAA35, NAA38 and NAA30.

Its subcellular location is the cytoplasm. It is found in the nucleus. The catalysed reaction is N-terminal L-methionyl-L-leucyl-[protein] + acetyl-CoA = N-terminal N(alpha)-acetyl-L-methionyl-L-leucyl-[protein] + CoA + H(+). The enzyme catalyses N-terminal L-methionyl-L-isoleucyl-[protein] + acetyl-CoA = N-terminal N(alpha)-acetyl-L-methionyl-L-isoleucyl-[protein] + CoA + H(+). It catalyses the reaction N-terminal L-methionyl-L-phenylalanyl-[protein] + acetyl-CoA = N-terminal N(alpha)-acetyl-L-methionyl-L-phenylalanyl-[protein] + CoA + H(+). It carries out the reaction N-terminal L-methionyl-L-tryptophyl-[protein] + acetyl-CoA = N-terminal N(alpha)-acetyl-L-methionyl-L-tryptophyl-[protein] + CoA + H(+). The catalysed reaction is N-terminal L-methionyl-L-tyrosyl-[protein] + acetyl-CoA = N-terminal N(alpha)-acetyl-L-methionyl-L-tyrosyl-[protein] + CoA + H(+). Functionally, catalytic subunit of the N-terminal acetyltransferase C (NatC) complex. Catalyzes acetylation of the N-terminal methionine residues of peptides beginning with Met-Leu-Ala and Met-Leu-Gly. N-terminal acetylation protects proteins from ubiquitination and degradation by the N-end rule pathway. Necessary for the lysosomal localization and function of ARL8B sugeesting that ARL8B is a NatC substrate. This is N-alpha-acetyltransferase 30 (NAA30) from Homo sapiens (Human).